A 1521-amino-acid polypeptide reads, in one-letter code: Suppressor of Ty 6 homolog (1521 aa).

A disordered region spans residues methionine 1–glycine 238. The span at lysine 26 to methionine 41 shows a compositional bias: basic residues. Positions lysine 26–valine 42 match the Nuclear localization signal motif. Composition is skewed to acidic residues over residues serine 45–glutamate 56 and alanine 67–alanine 76. Positions lysine 77–glutamate 89 are enriched in basic and acidic residues. Residues aspartate 90–leucine 99 show a composition bias toward acidic residues. A compositionally biased stretch (basic and acidic residues) spans proline 126–arginine 157. Composition is skewed to acidic residues over residues arginine 166 to glycine 176, asparagine 191 to alanine 200, and phenylalanine 209 to glycine 238. Residues leucine 1183 to lysine 1252 enclose the S1 motif domain. The 90-residue stretch at histidine 1300–glutamine 1389 folds into the SH2 domain.

Belongs to the SPT6 family. In terms of assembly, interacts with glp-1 and lin-12. Abundant in embryos, and less abundant in larvae.

The protein localises to the nucleus. In terms of biological role, histone H3-H4 chaperone that plays a role in maintenance of chromatin structure during RNA polymerase II transcription elongation. Required for several aspects of morphogenesis of C.elegans, including regulation of division in the germline and gut and specification of ventral-uterine precursor cell fate. The polypeptide is Suppressor of Ty 6 homolog (emb-5) (Caenorhabditis elegans).